Reading from the N-terminus, the 146-residue chain is 3-hydroxyacyl-[acyl-carrier-protein] dehydratase FabZ (146 aa).

Histidine 47 is a catalytic residue.

Belongs to the thioester dehydratase family. FabZ subfamily.

The protein resides in the cytoplasm. It catalyses the reaction a (3R)-hydroxyacyl-[ACP] = a (2E)-enoyl-[ACP] + H2O. Functionally, involved in unsaturated fatty acids biosynthesis. Catalyzes the dehydration of short chain beta-hydroxyacyl-ACPs and long chain saturated and unsaturated beta-hydroxyacyl-ACPs. The protein is 3-hydroxyacyl-[acyl-carrier-protein] dehydratase FabZ of Nitrosospira multiformis (strain ATCC 25196 / NCIMB 11849 / C 71).